The sequence spans 266 residues: 3-methyl-2-oxobutanoate hydroxymethyltransferase (266 aa).

Positions 45 and 84 each coordinate Mg(2+). 3-methyl-2-oxobutanoate-binding positions include 45-46, D84, and K112; that span reads DS. Position 114 (E114) interacts with Mg(2+). E181 serves as the catalytic Proton acceptor.

It belongs to the PanB family. In terms of assembly, homodecamer; pentamer of dimers. Mg(2+) serves as cofactor.

The protein localises to the cytoplasm. It carries out the reaction 3-methyl-2-oxobutanoate + (6R)-5,10-methylene-5,6,7,8-tetrahydrofolate + H2O = 2-dehydropantoate + (6S)-5,6,7,8-tetrahydrofolate. The protein operates within cofactor biosynthesis; (R)-pantothenate biosynthesis; (R)-pantoate from 3-methyl-2-oxobutanoate: step 1/2. Catalyzes the reversible reaction in which hydroxymethyl group from 5,10-methylenetetrahydrofolate is transferred onto alpha-ketoisovalerate to form ketopantoate. This is 3-methyl-2-oxobutanoate hydroxymethyltransferase from Pseudomonas syringae pv. syringae (strain B728a).